A 268-amino-acid polypeptide reads, in one-letter code: 4-hydroxy-tetrahydrodipicolinate reductase (268 aa).

Position 8 to 13 (8 to 13) interacts with NAD(+); the sequence is GAAGRM. Arg36 provides a ligand contact to NADP(+). NAD(+)-binding positions include 99–101 and 123–126; these read GTT and AANF. Residue His156 is the Proton donor/acceptor of the active site. His157 is a binding site for (S)-2,3,4,5-tetrahydrodipicolinate. The Proton donor role is filled by Lys160. Residue 166 to 167 participates in (S)-2,3,4,5-tetrahydrodipicolinate binding; sequence GT.

It belongs to the DapB family.

The protein resides in the cytoplasm. The enzyme catalyses (S)-2,3,4,5-tetrahydrodipicolinate + NAD(+) + H2O = (2S,4S)-4-hydroxy-2,3,4,5-tetrahydrodipicolinate + NADH + H(+). The catalysed reaction is (S)-2,3,4,5-tetrahydrodipicolinate + NADP(+) + H2O = (2S,4S)-4-hydroxy-2,3,4,5-tetrahydrodipicolinate + NADPH + H(+). It participates in amino-acid biosynthesis; L-lysine biosynthesis via DAP pathway; (S)-tetrahydrodipicolinate from L-aspartate: step 4/4. In terms of biological role, catalyzes the conversion of 4-hydroxy-tetrahydrodipicolinate (HTPA) to tetrahydrodipicolinate. This is 4-hydroxy-tetrahydrodipicolinate reductase from Pseudomonas fluorescens (strain Pf0-1).